The chain runs to 179 residues: Bifunctional protein PyrR (179 aa).

The PRPP-binding motif lies at 100–112 (VILVDDVLFTGRT).

It belongs to the purine/pyrimidine phosphoribosyltransferase family. PyrR subfamily.

It carries out the reaction UMP + diphosphate = 5-phospho-alpha-D-ribose 1-diphosphate + uracil. Functionally, regulates the transcription of the pyrimidine nucleotide (pyr) operon in response to exogenous pyrimidines. Also displays a weak uracil phosphoribosyltransferase activity which is not physiologically significant. This is Bifunctional protein PyrR from Actinobacillus succinogenes (strain ATCC 55618 / DSM 22257 / CCUG 43843 / 130Z).